Here is a 1078-residue protein sequence, read N- to C-terminus: DNA-directed RNA polymerase subunit beta (1078 aa).

The protein belongs to the RNA polymerase beta chain family. In terms of assembly, the minimal PEP RNA polymerase found in etioplasts (PEP-B) is composed of four subunits: alpha, beta, beta', and beta''. Following differentiation into chloroplasts the PEP-A RNA polymerase in this organism has been shown to be composed of at least 13 subunits, including the PEP-B subunits. When a (nuclear-encoded) sigma factor is associated with the core the holoenzyme is formed, which can initiate transcription.

It is found in the plastid. The protein resides in the chloroplast. The enzyme catalyses RNA(n) + a ribonucleoside 5'-triphosphate = RNA(n+1) + diphosphate. Functionally, DNA-dependent RNA polymerase catalyzes the transcription of DNA into RNA using the four ribonucleoside triphosphates as substrates. In Sinapis alba (White mustard), this protein is DNA-directed RNA polymerase subunit beta (rpoB).